The sequence spans 205 residues: Thymidylate kinase (205 aa).

Position 9-16 (9-16 (GPEGSGKT)) interacts with ATP.

The protein belongs to the thymidylate kinase family.

It catalyses the reaction dTMP + ATP = dTDP + ADP. Its function is as follows. Phosphorylation of dTMP to form dTDP in both de novo and salvage pathways of dTTP synthesis. The protein is Thymidylate kinase of Staphylococcus aureus (strain MSSA476).